The chain runs to 229 residues: MERVRQMFSCVSGMIYRPTDSIAEEYHKWYYGNFVWNTTTWMGIKCLKSVSDMWNYQEILIELEPSLVIEFGSRFGGSALFFANVMMHIGQPFKVLSVDISHKDLDPAARQPDILFIESPSTAPAIAEQIRRLKNEYPGKIFAILDSDHSMKQVLAEMKLLQPLLTAGDYLVVEDSNLNGHPVLPRFGAGPYEAIEAYEREFPGDYEHDVAREKKFGFTFATNGFLIRK.

The N-terminal stretch at 1 to 23 (MERVRQMFSCVSGMIYRPTDSIA) is a signal peptide.

It belongs to the rhamnosyl O-methyltransferase family.

Functionally, catalyzes the O-methylation of the hydroxyl group located on C-2 of the first rhamnosyl residue linked to the phenolic group of glycosylated phenolphthiocerol dimycocerosates (PGL) and p-hydroxybenzoic acid derivatives (p-HBAD). The polypeptide is Rhamnosyl O-methyltransferase (Mycobacterium leprae (strain TN)).